The following is a 197-amino-acid chain: Small ribosomal subunit protein uS7 (197 aa).

The protein belongs to the universal ribosomal protein uS7 family. In terms of assembly, part of the 30S ribosomal subunit.

Functionally, one of the primary rRNA binding proteins, it binds directly to 16S rRNA where it nucleates assembly of the head domain of the 30S subunit. Is located at the subunit interface close to the decoding center. The sequence is that of Small ribosomal subunit protein uS7 from Methanopyrus kandleri (strain AV19 / DSM 6324 / JCM 9639 / NBRC 100938).